A 426-amino-acid polypeptide reads, in one-letter code: Serine hydroxymethyltransferase (426 aa).

(6S)-5,6,7,8-tetrahydrofolate-binding positions include L118 and 122–124 (GHL). K227 is modified (N6-(pyridoxal phosphate)lysine).

Belongs to the SHMT family. Homodimer. The cofactor is pyridoxal 5'-phosphate.

The protein localises to the cytoplasm. The catalysed reaction is (6R)-5,10-methylene-5,6,7,8-tetrahydrofolate + glycine + H2O = (6S)-5,6,7,8-tetrahydrofolate + L-serine. Its pathway is one-carbon metabolism; tetrahydrofolate interconversion. It functions in the pathway amino-acid biosynthesis; glycine biosynthesis; glycine from L-serine: step 1/1. Its function is as follows. Catalyzes the reversible interconversion of serine and glycine with tetrahydrofolate (THF) serving as the one-carbon carrier. This reaction serves as the major source of one-carbon groups required for the biosynthesis of purines, thymidylate, methionine, and other important biomolecules. Also exhibits THF-independent aldolase activity toward beta-hydroxyamino acids, producing glycine and aldehydes, via a retro-aldol mechanism. The polypeptide is Serine hydroxymethyltransferase (Mycolicibacterium paratuberculosis (strain ATCC BAA-968 / K-10) (Mycobacterium paratuberculosis)).